The chain runs to 79 residues: Reactive oxygen species modulator 1 (79 aa).

Residues 22-44 traverse the membrane as a helical segment; sequence GFVMGCAVGMAAGALFGTFSCLR. Positions 42 to 60 are sufficient for antibacterial activity; the sequence is CLRIGMRGRELMGGIGKTM.

The protein belongs to the MGR2 family.

It is found in the mitochondrion inner membrane. Has antibacterial activity against a variety of bacteria including S.aureus, P.aeruginosa and M.tuberculosis. Acts by inducing bacterial membrane breakage. In terms of biological role, induces production of reactive oxygen species (ROS) which are necessary for cell proliferation. May play a role in inducing oxidative DNA damage and replicative senescence. May play a role in the coordination of mitochondrial morphology and cell proliferation. This chain is Reactive oxygen species modulator 1 (ROMO1), found in Bos taurus (Bovine).